The chain runs to 138 residues: Small ribosomal subunit protein uS11c (138 aa).

Residues methionine 1 to arginine 24 form a disordered region. Positions glycine 9–arginine 24 are enriched in basic residues.

It belongs to the universal ribosomal protein uS11 family. As to quaternary structure, part of the 30S ribosomal subunit.

It localises to the plastid. It is found in the chloroplast. This Gossypium hirsutum (Upland cotton) protein is Small ribosomal subunit protein uS11c.